An 854-amino-acid polypeptide reads, in one-letter code: Envelope glycoprotein gp160 (854 aa).

The signal sequence occupies residues 1-31 (MKVMEKKKRDWNSLSIITIITIILLTPCLTS). Residues 32-675 (ELWVTVYYGV…ITKWLWYIKI (644 aa)) lie on the Extracellular side of the membrane. 6 cysteine pairs are disulfide-bonded: C53–C73, C118–C203, C125–C194, C130–C155, C216–C245, and C226–C237. The segment at 130–154 (CSKANFSQAKNLTNQTSSPPLEMKN) is V1. Residues N134, N140, N143, N154, N158, N186, and N195 are each glycosylated (N-linked (GlcNAc...) asparagine; by host). The V2 stretch occupies residues 155–194 (CSFNVTTELRDKKKQVYSLFYVEDVVNLGNENNTYRIINC). N239, N260, N267, N274, N299, N331, N336, N351, and N356 each carry an N-linked (GlcNAc...) asparagine; by host glycan. Positions 294–327 (CHRPGNNTRGEVQIGPGMTFYNIENVVGDTRSAY) are V3. Residues C294 and C328 are joined by a disulfide bond. A CD4-binding loop region spans residues 362 to 372 (ASGGDPEVTHH). Intrachain disulfides connect C376-C429 and C383-C402. Positions 383–402 (CNTSQIFTDNITNGIIILPC) are V4. N-linked (GlcNAc...) asparagine; by host glycosylation is found at N384, N392, N426, N432, N446, and N450. V5 regions lie at residues 445-456 (TNNSGNLTFRPT) and 447-456 (NSGNLTFRPT). The fusion peptide stretch occupies residues 501 to 522 (AAFGLGALFLGFLGAAGSTMGA). Residues 564–582 (KQLQARLLAVERYLQDQQI) form an immunosuppression region. An intrachain disulfide couples C588 to C594. Residues N601, N608, N616, and N628 are each glycosylated (N-linked (GlcNAc...) asparagine; by host). Positions 624-658 (KLVSNYTGKIFGLLEEAQSQQEKNERDLLELDQWA) form a coiled coil. The MPER; binding to GalCer stretch occupies residues 653-674 (ELDQWASLWNWFDITKWLWYIK). The chain crosses the membrane as a helical span at residues 676–696 (FLMAVGGIIGLRIIMTVFSVV). The Cytoplasmic portion of the chain corresponds to 697 to 854 (RRVRQGYSPL…IRQGLERALL (158 aa)). The short motif at 703–706 (YSPL) is the YXXL motif; contains endocytosis signal element. The Di-leucine internalization motif motif lies at 853–854 (LL).

It belongs to the HIV-1 env protein family. In terms of assembly, the mature envelope protein (Env) consists of a homotrimer of non-covalently associated gp120-gp41 heterodimers. The resulting complex protrudes from the virus surface as a spike. There seems to be as few as 10 spikes on the average virion. Interacts with host CD4, CCR5 and CXCR4. Gp120 also interacts with the C-type lectins CD209/DC-SIGN and CLEC4M/DC-SIGNR (collectively referred to as DC-SIGN(R)). Gp120 and gp41 interact with GalCer. Gp120 interacts with host ITGA4/ITGB7 complex; on CD4+ T-cells, this interaction results in rapid activation of integrin ITGAL/LFA-1, which facilitates efficient cell-to-cell spreading of HIV-1. Gp120 interacts with cell-associated heparan sulfate; this interaction increases virus infectivity on permissive cells and may be involved in infection of CD4- cells. As to quaternary structure, the mature envelope protein (Env) consists of a homotrimer of non-covalently associated gp120-gp41 heterodimers. The resulting complex protrudes from the virus surface as a spike. There seems to be as few as 10 spikes on the average virion. In terms of processing, highly glycosylated by host. The high number of glycan on the protein is reffered to as 'glycan shield' because it contributes to hide protein sequence from adaptive immune system. Post-translationally, palmitoylation of the transmembrane protein and of Env polyprotein (prior to its proteolytic cleavage) is essential for their association with host cell membrane lipid rafts. Palmitoylation is therefore required for envelope trafficking to classical lipid rafts, but not for viral replication. Specific enzymatic cleavages in vivo yield mature proteins. Envelope glycoproteins are synthesized as an inactive precursor that is heavily N-glycosylated and processed likely by host cell furin in the Golgi to yield the mature SU and TM proteins. The cleavage site between SU and TM requires the minimal sequence [KR]-X-[KR]-R. About 2 of the 9 disulfide bonds of gp41 are reduced by P4HB/PDI, following binding to CD4 receptor.

The protein resides in the virion membrane. The protein localises to the host cell membrane. Its subcellular location is the host endosome membrane. Attaches the virus to the host lymphoid cell by binding to the primary receptor CD4. This interaction induces a structural rearrangement creating a high affinity binding site for a chemokine coreceptor like CXCR4 and/or CCR5. Acts as a ligand for CD209/DC-SIGN and CLEC4M/DC-SIGNR, which are respectively found on dendritic cells (DCs), and on endothelial cells of liver sinusoids and lymph node sinuses. These interactions allow capture of viral particles at mucosal surfaces by these cells and subsequent transmission to permissive cells. HIV subverts the migration properties of dendritic cells to gain access to CD4+ T-cells in lymph nodes. Virus transmission to permissive T-cells occurs either in trans (without DCs infection, through viral capture and transmission), or in cis (following DCs productive infection, through the usual CD4-gp120 interaction), thereby inducing a robust infection. In trans infection, bound virions remain infectious over days and it is proposed that they are not degraded, but protected in non-lysosomal acidic organelles within the DCs close to the cell membrane thus contributing to the viral infectious potential during DCs' migration from the periphery to the lymphoid tissues. On arrival at lymphoid tissues, intact virions recycle back to DCs' cell surface allowing virus transmission to CD4+ T-cells. In terms of biological role, acts as a class I viral fusion protein. Under the current model, the protein has at least 3 conformational states: pre-fusion native state, pre-hairpin intermediate state, and post-fusion hairpin state. During fusion of viral and target intracellular membranes, the coiled coil regions (heptad repeats) assume a trimer-of-hairpins structure, positioning the fusion peptide in close proximity to the C-terminal region of the ectodomain. The formation of this structure appears to drive apposition and subsequent fusion of viral and target cell membranes. Complete fusion occurs in host cell endosomes and is dynamin-dependent, however some lipid transfer might occur at the plasma membrane. The virus undergoes clathrin-dependent internalization long before endosomal fusion, thus minimizing the surface exposure of conserved viral epitopes during fusion and reducing the efficacy of inhibitors targeting these epitopes. Membranes fusion leads to delivery of the nucleocapsid into the cytoplasm. Its function is as follows. Oligomerizes in the host endoplasmic reticulum into predominantly trimers. In a second time, gp160 transits in the host Golgi, where glycosylation is completed. The precursor is then proteolytically cleaved in the trans-Golgi and thereby activated by cellular furin or furin-like proteases to produce gp120 and gp41. In Pan (chimpanzees), this protein is Envelope glycoprotein gp160.